Reading from the N-terminus, the 273-residue chain is MSAIPSSNKRRTIPELRARKGKSPIVALTAYSALTARFVDPYADFILVGDSLAMVEHGMATTIGASLDMMILHGQSVMRGSEKAAVVIDMPFGSYEASPQEAYHNAVRILSETGCSAVKLEGGSHLAPVIAFLTARGVPVMGHIGLTPQYVQTLGGFKIQGHSSEQQDKIKQDALDFEAAGAFSVVLEGVTEPLAREITDNIAIPTIGIGASSYCDGQVLVLEDMLGFNDKVPRFVKKFAHLGDDIKKAVSDYATAVSNRSFPAEDNIYRPKS.

Residues Asp50 and Asp89 each coordinate Mg(2+). 3-methyl-2-oxobutanoate-binding positions include 50 to 51 (DS), Asp89, and Lys119. Glu121 is a binding site for Mg(2+). Glu188 acts as the Proton acceptor in catalysis.

The protein belongs to the PanB family. In terms of assembly, homodecamer; pentamer of dimers. The cofactor is Mg(2+).

It is found in the cytoplasm. The catalysed reaction is 3-methyl-2-oxobutanoate + (6R)-5,10-methylene-5,6,7,8-tetrahydrofolate + H2O = 2-dehydropantoate + (6S)-5,6,7,8-tetrahydrofolate. It functions in the pathway cofactor biosynthesis; (R)-pantothenate biosynthesis; (R)-pantoate from 3-methyl-2-oxobutanoate: step 1/2. In terms of biological role, catalyzes the reversible reaction in which hydroxymethyl group from 5,10-methylenetetrahydrofolate is transferred onto alpha-ketoisovalerate to form ketopantoate. This Zymomonas mobilis subsp. mobilis (strain ATCC 31821 / ZM4 / CP4) protein is 3-methyl-2-oxobutanoate hydroxymethyltransferase 2.